Reading from the N-terminus, the 228-residue chain is Translin (228 aa).

The interval arginine 86–histidine 90 is DNA/RNA binding. The leucine-zipper stretch occupies residues leucine 177 to leucine 198. Position 187 is an N6-acetyllysine (lysine 187). A Phosphoserine modification is found at serine 190. Lysine 199 is subject to N6-acetyllysine.

The protein belongs to the translin family. Ring-shaped heterooctamer of six TSN and two TSNAX subunits, DNA/RNA binding occurs inside the ring.

Its subcellular location is the cytoplasm. The protein resides in the nucleus. Its function is as follows. DNA-binding protein that specifically recognizes consensus sequences at the breakpoint junctions in chromosomal translocations, mostly involving immunoglobulin (Ig)/T-cell receptor gene segments. Seems to recognize single-stranded DNA ends generated by staggered breaks occurring at recombination hot spots. Exhibits both single-stranded and double-stranded endoribonuclease activity. May act as an activator of RNA-induced silencing complex (RISC) by facilitating endonucleolytic cleavage of the siRNA passenger strand. The protein is Translin (TSN) of Cricetulus griseus (Chinese hamster).